Consider the following 122-residue polypeptide: Large ribosomal subunit protein uL14 (122 aa).

Belongs to the universal ribosomal protein uL14 family. As to quaternary structure, part of the 50S ribosomal subunit. Forms a cluster with proteins L3 and L19. In the 70S ribosome, L14 and L19 interact and together make contacts with the 16S rRNA in bridges B5 and B8.

Its function is as follows. Binds to 23S rRNA. Forms part of two intersubunit bridges in the 70S ribosome. The chain is Large ribosomal subunit protein uL14 from Geobacillus sp. (strain WCH70).